The following is a 512-amino-acid chain: 2'-5'-oligoadenylate synthase-like protein 1 (512 aa).

Ubiquitin-like domains are found at residues 351-430 (IQVT…ISPE) and 431-507 (IQVF…EGKA).

Belongs to the 2-5A synthase family. As to quaternary structure, specifically interacts with the ligand binding domain of the thyroid receptor (TR). TRIP14 does not require the presence of thyroid hormone for its interaction. Binds MBD1.

The protein localises to the nucleus. It localises to the nucleolus. It is found in the cytoplasm. Functionally, does not have 2'-5'-OAS activity, but can bind double-stranded RNA. Displays antiviral activity via an alternative antiviral pathway independent of RNase L. In Rattus norvegicus (Rat), this protein is 2'-5'-oligoadenylate synthase-like protein 1 (Oasl).